A 303-amino-acid chain; its full sequence is UDP-N-acetylenolpyruvoylglucosamine reductase (303 aa).

An FAD-binding PCMH-type domain is found at 32-212 (IGGKADLFLN…EQETKEYLAK (181 aa)). The active site involves Arg176. Ser226 acts as the Proton donor in catalysis. Glu296 is a catalytic residue.

The protein belongs to the MurB family. FAD serves as cofactor.

It is found in the cytoplasm. It catalyses the reaction UDP-N-acetyl-alpha-D-muramate + NADP(+) = UDP-N-acetyl-3-O-(1-carboxyvinyl)-alpha-D-glucosamine + NADPH + H(+). The protein operates within cell wall biogenesis; peptidoglycan biosynthesis. Its function is as follows. Cell wall formation. This is UDP-N-acetylenolpyruvoylglucosamine reductase from Desulforamulus reducens (strain ATCC BAA-1160 / DSM 100696 / MI-1) (Desulfotomaculum reducens).